The sequence spans 445 residues: MRIHFVGIGGIGMSSLALHSRLIGEDVYGSDIYESEQTEILRKLGVKIFIGHNYNNWLYPDIVVHTPAVHSDNPEIIRARSNGIRVVSRFEFLYDILNNGKTQFAVTGSDGKTTTTAMLAHCLKVLGEDPTVFLGGIHRSLEFGNYRPGKGPYVYELDESQPEFSRFSPDYMIITNARGDHLENYSGDRQLYRDCFRSVVMSTRKSVVTFSEDENTSDLGTWTFGKSINSTCRLIDRNRNGLFQFAKIEINGKEYNLTLKVPGEHNILNAMAVITLLWSAGHEVEEVLKALEDFTGTYRRFTVTVIDEKRKVYMIDDYAHTPDEIKSLLSTTREVFPSQKRVVIFQPHRYSRLMREDGNFAKALKDADEIYITEVYSAFEQTIPQISSKVIADGLVSYGKKAQYVADADLLIENFQLQENTIYLFVGAGDIIRISQKFAKMHAKK.

108 to 114 (GSDGKTT) contributes to the ATP binding site.

It belongs to the MurCDEF family.

Its subcellular location is the cytoplasm. The enzyme catalyses UDP-N-acetyl-alpha-D-muramate + L-alanine + ATP = UDP-N-acetyl-alpha-D-muramoyl-L-alanine + ADP + phosphate + H(+). It functions in the pathway cell wall biogenesis; peptidoglycan biosynthesis. Functionally, cell wall formation. This Pseudothermotoga lettingae (strain ATCC BAA-301 / DSM 14385 / NBRC 107922 / TMO) (Thermotoga lettingae) protein is UDP-N-acetylmuramate--L-alanine ligase.